The sequence spans 1947 residues: DNA-directed RNA polymerase subunit beta' (1947 aa).

Zn(2+)-binding residues include Cys-119, Cys-121, Cys-141, and Cys-144. 3 residues coordinate Mg(2+): Asp-1778, Asp-1780, and Asp-1782.

This sequence belongs to the RNA polymerase beta' chain family. RpoC1 subfamily. In plastids the minimal PEP RNA polymerase catalytic core is composed of four subunits: alpha, beta, beta', and beta''. When a (nuclear-encoded) sigma factor is associated with the core the holoenzyme is formed, which can initiate transcription. Mg(2+) is required as a cofactor. Requires Zn(2+) as cofactor.

It localises to the plastid. The protein resides in the chloroplast. It carries out the reaction RNA(n) + a ribonucleoside 5'-triphosphate = RNA(n+1) + diphosphate. In terms of biological role, DNA-dependent RNA polymerase catalyzes the transcription of DNA into RNA using the four ribonucleoside triphosphates as substrates. In Oedogonium cardiacum (Filamentous green alga), this protein is DNA-directed RNA polymerase subunit beta'.